We begin with the raw amino-acid sequence, 146 residues long: Catabolic 3-dehydroquinase (146 aa).

The Proton acceptor role is filled by Y24. 3 residues coordinate substrate: N78, H84, and D91. The Proton donor role is filled by H104. Substrate-binding positions include 105 to 106 and R115; that span reads IT.

The protein belongs to the type-II 3-dehydroquinase family. Homododecamer. Adopts a ring-like structure, composed of an arrangement of two hexameric rings stacked on top of one another.

It catalyses the reaction 3-dehydroquinate = 3-dehydroshikimate + H2O. The protein operates within aromatic compound metabolism; 3,4-dihydroxybenzoate biosynthesis; 3,4-dihydroxybenzoate from 3-dehydroquinate: step 1/2. In terms of biological role, is involved in the catabolism of quinate. Allows the utilization of quinate as carbon source via the beta-ketoadipate pathway. The sequence is that of Catabolic 3-dehydroquinase from Candida dubliniensis (strain CD36 / ATCC MYA-646 / CBS 7987 / NCPF 3949 / NRRL Y-17841) (Yeast).